Consider the following 231-residue polypeptide: Large ribosomal subunit protein uL1 (231 aa).

Belongs to the universal ribosomal protein uL1 family. As to quaternary structure, part of the 50S ribosomal subunit.

Its function is as follows. Binds directly to 23S rRNA. The L1 stalk is quite mobile in the ribosome, and is involved in E site tRNA release. In terms of biological role, protein L1 is also a translational repressor protein, it controls the translation of the L11 operon by binding to its mRNA. This chain is Large ribosomal subunit protein uL1, found in Ectopseudomonas mendocina (strain ymp) (Pseudomonas mendocina).